The following is a 148-amino-acid chain: uncharacterized protein (148 aa).

The signal sequence occupies residues 1–20 (MNLTKLLPAFAAAVVLSACA).

This is an uncharacterized protein from Haemophilus influenzae (strain ATCC 51907 / DSM 11121 / KW20 / Rd).